Reading from the N-terminus, the 315-residue chain is Methionyl-tRNA formyltransferase (315 aa).

Residue 112–115 coordinates (6S)-5,6,7,8-tetrahydrofolate; it reads SLLP.

The protein belongs to the Fmt family.

The enzyme catalyses L-methionyl-tRNA(fMet) + (6R)-10-formyltetrahydrofolate = N-formyl-L-methionyl-tRNA(fMet) + (6S)-5,6,7,8-tetrahydrofolate + H(+). Attaches a formyl group to the free amino group of methionyl-tRNA(fMet). The formyl group appears to play a dual role in the initiator identity of N-formylmethionyl-tRNA by promoting its recognition by IF2 and preventing the misappropriation of this tRNA by the elongation apparatus. The polypeptide is Methionyl-tRNA formyltransferase (Leptospira interrogans serogroup Icterohaemorrhagiae serovar copenhageni (strain Fiocruz L1-130)).